The primary structure comprises 620 residues: Toxin coregulated pilus biosynthesis protein I (620 aa).

Residues Thr344 to Arg580 form the Methyl-accepting transducer domain.

This sequence belongs to the methyl-accepting chemotaxis (MCP) protein family.

The protein resides in the cell inner membrane. Its function is as follows. May function as an environmental regulator of TCP biogenesis. Negatively regulates the synthesis of the major pilin subunit of TCP (TcpA). This is Toxin coregulated pilus biosynthesis protein I (tcpI) from Vibrio cholerae serotype O1 (strain ATCC 39315 / El Tor Inaba N16961).